The following is a 272-amino-acid chain: 3-methyl-2-oxobutanoate hydroxymethyltransferase (272 aa).

Positions 42 and 86 each coordinate Mg(2+). 3-methyl-2-oxobutanoate contacts are provided by residues 42 to 43 (DS), D86, and K116. E118 contacts Mg(2+). Residue E185 is the Proton acceptor of the active site.

This sequence belongs to the PanB family. As to quaternary structure, homodecamer; pentamer of dimers. The cofactor is Mg(2+).

Its subcellular location is the cytoplasm. The enzyme catalyses 3-methyl-2-oxobutanoate + (6R)-5,10-methylene-5,6,7,8-tetrahydrofolate + H2O = 2-dehydropantoate + (6S)-5,6,7,8-tetrahydrofolate. It participates in cofactor biosynthesis; (R)-pantothenate biosynthesis; (R)-pantoate from 3-methyl-2-oxobutanoate: step 1/2. In terms of biological role, catalyzes the reversible reaction in which hydroxymethyl group from 5,10-methylenetetrahydrofolate is transferred onto alpha-ketoisovalerate to form ketopantoate. The protein is 3-methyl-2-oxobutanoate hydroxymethyltransferase of Prochlorococcus marinus (strain NATL1A).